The primary structure comprises 341 residues: L-sulfolactate dehydrogenase (341 aa).

Belongs to the LDH2/MDH2 oxidoreductase family.

The protein localises to the cytoplasm. It carries out the reaction a (2S)-2-hydroxycarboxylate + NAD(+) = a 2-oxocarboxylate + NADH + H(+). It participates in cofactor biosynthesis; coenzyme M biosynthesis; sulfoacetaldehyde from phosphoenolpyruvate and sulfite: step 3/4. It functions in the pathway cofactor biosynthesis; 5,6,7,8-tetrahydromethanopterin biosynthesis. Functionally, catalyzes the reduction of sulfopyruvate to (R)-sulfolactate. Involved in the biosynthesis of both coenzyme M (with (R)-sulfolactate) and methanopterin (with alpha-ketoglutarate). The protein is L-sulfolactate dehydrogenase (comC) of Methanothermobacter thermautotrophicus (strain ATCC 29096 / DSM 1053 / JCM 10044 / NBRC 100330 / Delta H) (Methanobacterium thermoautotrophicum).